The primary structure comprises 197 residues: Cytochrome c oxidase polypeptide 5, mitochondrial (197 aa).

Residues 1–13 constitute a mitochondrion transit peptide; that stretch reads MFLRSVTRAAARS. Over 14–129 the chain is Mitochondrial matrix; that stretch reads SAVPTTGLRS…KGENLKIFFK (116 aa). The helical transmembrane segment at 130 to 147 threads the bilayer; that stretch reads VAQLTLVSFGIFYVIHLF. At 148–197 the chain is on the mitochondrial intermembrane side; the sequence is AKPQPKTMTKEWQEASNEYAKQEKINPIYGISAEGYEGKGFVQSPPAEKQ.

This sequence belongs to the cytochrome c oxidase IV family. As to quaternary structure, component of the cytochrome c oxidase (complex IV, CIV), a multisubunit enzyme composed of a catalytic core of 3 subunits and seevral supernumerary subunits. The complex exists as a monomer or a dimer and forms supercomplexes (SCs) in the inner mitochondrial membrane with ubiquinol-cytochrome c oxidoreductase (cytochrome b-c1 complex, complex III, CIII).

It localises to the mitochondrion inner membrane. Its pathway is energy metabolism; oxidative phosphorylation. In terms of biological role, component of the cytochrome c oxidase, the last enzyme in the mitochondrial electron transport chain which drives oxidative phosphorylation. The respiratory chain contains 3 multisubunit complexes succinate dehydrogenase (complex II, CII), ubiquinol-cytochrome c oxidoreductase (cytochrome b-c1 complex, complex III, CIII) and cytochrome c oxidase (complex IV, CIV), that cooperate to transfer electrons derived from NADH and succinate to molecular oxygen, creating an electrochemical gradient over the inner membrane that drives transmembrane transport and the ATP synthase. Cytochrome c oxidase is the component of the respiratory chain that catalyzes the reduction of oxygen to water. Electrons originating from reduced cytochrome c in the intermembrane space (IMS) are transferred via the dinuclear copper A center (CU(A)) of subunit 2 and heme A of subunit 1 to the active site in subunit 1, a binuclear center (BNC) formed by heme A3 and copper B (CU(B)). The BNC reduces molecular oxygen to 2 water molecules using 4 electrons from cytochrome c in the IMS and 4 protons from the mitochondrial matrix. This Aspergillus niger protein is Cytochrome c oxidase polypeptide 5, mitochondrial (cox5).